A 324-amino-acid polypeptide reads, in one-letter code: Gamma-soluble NSF attachment protein (324 aa).

The span at Asn-285 to Ser-298 shows a compositional bias: polar residues. The segment at Asn-285–Leu-324 is disordered. The segment covering Asn-299–Asn-312 has biased composition (low complexity).

The protein belongs to the SNAP family. Interacts with nsfA and probably SNARE proteins.

Its subcellular location is the cytoplasmic vesicle membrane. Its function is as follows. May be required for vesicular transport between the endoplasmic reticulum and the Golgi apparatus. Involved in vesicle fusion with nsfA and probably SNARE proteins. This chain is Gamma-soluble NSF attachment protein (snpC), found in Dictyostelium discoideum (Social amoeba).